A 344-amino-acid polypeptide reads, in one-letter code: Cinnamoyl-CoA reductase 1 (344 aa).

Residue Ser-7 is modified to Phosphoserine. Residues 17-23 (GAGGYIA), Arg-42, Lys-48, 68-69 (DL), 88-90 (TAS), Tyr-161, Lys-165, 188-191 (PVLV), and Ser-203 each bind NADP(+). Cys-154 and Cys-162 are disulfide-bonded. Lys-165 serves as the catalytic Proton donor. Positions 317-344 (QEKGHLAPPPPPPSASQESVENGIKIGS) are disordered.

Belongs to the NAD(P)-dependent epimerase/dehydratase family. Dihydroflavonol-4-reductase subfamily. Expressed in leaves, stems and flowers.

It catalyses the reaction (E)-cinnamaldehyde + NADP(+) + CoA = (E)-cinnamoyl-CoA + NADPH + H(+). It functions in the pathway aromatic compound metabolism; phenylpropanoid biosynthesis. Functionally, involved in the latter stages of lignin biosynthesis. Catalyzes one of the last steps of monolignol biosynthesis, the conversion of cinnamoyl-CoAs into their corresponding cinnamaldehydes. The sequence is that of Cinnamoyl-CoA reductase 1 from Arabidopsis thaliana (Mouse-ear cress).